The sequence spans 147 residues: Hemoglobin subunit delta (147 aa).

In terms of domain architecture, Globin spans 3–147 (HLTADEKAAV…VAAALAHKYH (145 aa)). Heme b is bound by residues H64 and H93.

It belongs to the globin family. In terms of assembly, heterotetramer of two delta chains and two alpha chains. Red blood cells.

The protein is Hemoglobin subunit delta (HBD) of Carlito syrichta (Philippine tarsier).